A 179-amino-acid chain; its full sequence is MFRASLLCCLVLLAGVWADNKYDSESGDDCPTLPTSLPHMLHELRAAFSRVKTFFQMKDQLDNMLLDGSLLEDFKGYLGCQALSEMIQFYLEEVMPQAENHSTDQEKDKVNSLGEKLKTLRVRLRRCHRFLPCENKSKAVEQVKSAFSKLQEKGVYKAMSEFDIFINYIEAYMTTKMKN.

The N-terminal stretch at 1-18 is a signal peptide; it reads MFRASLLCCLVLLAGVWA. Disulfide bonds link C30–C127 and C80–C133. Residues N100 and N135 are each glycosylated (N-linked (GlcNAc...) asparagine; by host).

It belongs to the IL-10 family.

Its subcellular location is the secreted. Its function is as follows. Down-regulates the expression of the TAP1 gene (transporter associated with antigen processing), thereby affecting the transport of peptides into the endoplasmic reticulum and subsequent peptide loading by MHC class I molecules. In consequence, infected cells are masked for immune recognition by cytotoxic T-lymphocytes. The sequence is that of Viral interleukin-10 homolog from Equus caballus (Horse).